The following is a 326-amino-acid chain: Zinc finger protein 830 (326 aa).

Basic residues predominate over residues Met1 to Lys11. Residues Met1 to Ser37 are disordered. The segment covering Val13–Glu36 has biased composition (basic and acidic residues). The segment at Cys50 to His72 adopts a C2H2-type zinc-finger fold. Over residues Thr83–Thr108 the composition is skewed to low complexity. 3 disordered regions span residues Thr83–Asp214, Glu237–Arg257, and Glu276–Glu309. Polar residues predominate over residues His180 to Pro195. The stretch at Lys224 to Glu295 forms a coiled coil. Over residues Glu276 to Arg286 the composition is skewed to basic and acidic residues. Residues Pro298 to Glu309 show a composition bias toward acidic residues.

The protein resides in the nucleus. It is found in the chromosome. The protein localises to the nucleus speckle. Its function is as follows. May act as an important regulator of the cell cycle that participates in the maintenance of genome integrity. The polypeptide is Zinc finger protein 830 (Danio rerio (Zebrafish)).